Here is a 156-residue protein sequence, read N- to C-terminus: Non-structural protein 2 (156 aa).

Belongs to the pneumovirus non-structural protein 2 family.

It localises to the host cytoplasm. Its function is as follows. Plays a major role in antagonizing the type I IFN-mediated antiviral response. May also inhibit viral transcription and RNA replication. The protein is Non-structural protein 2 (1B) of Mus musculus (Mouse).